Reading from the N-terminus, the 132-residue chain is MTMTDPLGDMLTRIRNGASRRKSSVSTPASKLRARVLDVLQSEGYIRGYSVVDFGNGKSELNIELKYYEGASVIREIGRVSKPGRRVYVSVKSIPQVANGLGITILSTPKGVMADHQAREQNVGGEVLCSVF.

Belongs to the universal ribosomal protein uS8 family. As to quaternary structure, part of the 30S ribosomal subunit. Contacts proteins S5 and S12.

Its function is as follows. One of the primary rRNA binding proteins, it binds directly to 16S rRNA central domain where it helps coordinate assembly of the platform of the 30S subunit. The chain is Small ribosomal subunit protein uS8 from Rhizobium etli (strain CIAT 652).